Consider the following 127-residue polypeptide: MKEQVEIRTLKEGRYIIIDDEPCIIKSIAHSKPGKHGAAKARIDAIGIFDNQKRSIVAPVTTKVYAPIVERKTGQVLSVGETSVQLMDLKDYTTIDVPITEDMKPKLEPGKEVAYLSSMGKVKMDIR.

At Lys-35 the chain carries Hypusine.

It belongs to the eIF-5A family.

It is found in the cytoplasm. In terms of biological role, functions by promoting the formation of the first peptide bond. In Methanothrix thermoacetophila (strain DSM 6194 / JCM 14653 / NBRC 101360 / PT) (Methanosaeta thermophila), this protein is Translation initiation factor 5A (eIF5A).